A 91-amino-acid chain; its full sequence is Small ribosomal subunit protein uS19 (91 aa).

It belongs to the universal ribosomal protein uS19 family.

Its function is as follows. Protein S19 forms a complex with S13 that binds strongly to the 16S ribosomal RNA. This Fusobacterium nucleatum subsp. nucleatum (strain ATCC 25586 / DSM 15643 / BCRC 10681 / CIP 101130 / JCM 8532 / KCTC 2640 / LMG 13131 / VPI 4355) protein is Small ribosomal subunit protein uS19.